Reading from the N-terminus, the 194-residue chain is dCTP deaminase, dUMP-forming (194 aa).

DCTP is bound by residues Arg105–Arg110, Asp123, Thr131–Glu133, Gln152, Tyr166, Lys174, and Gln178. The active-site Proton donor/acceptor is Glu133.

This sequence belongs to the dCTP deaminase family. Homotrimer.

The catalysed reaction is dCTP + 2 H2O = dUMP + NH4(+) + diphosphate. Its pathway is pyrimidine metabolism; dUMP biosynthesis; dUMP from dCTP: step 1/1. Its function is as follows. Bifunctional enzyme that catalyzes both the deamination of dCTP to dUTP and the hydrolysis of dUTP to dUMP without releasing the toxic dUTP intermediate. The protein is dCTP deaminase, dUMP-forming of Methanobrevibacter smithii (strain ATCC 35061 / DSM 861 / OCM 144 / PS).